Consider the following 165-residue polypeptide: Phosphopantetheine adenylyltransferase (165 aa).

Residue threonine 10 coordinates substrate. Residues 10 to 11 (TF) and histidine 18 contribute to the ATP site. Substrate-binding residues include lysine 42, leucine 75, and arginine 89. Residues 90-92 (GVR), glutamate 100, and 125-131 (VSFISSS) each bind ATP.

This sequence belongs to the bacterial CoaD family. Homohexamer. Mg(2+) is required as a cofactor.

It is found in the cytoplasm. The enzyme catalyses (R)-4'-phosphopantetheine + ATP + H(+) = 3'-dephospho-CoA + diphosphate. Its pathway is cofactor biosynthesis; coenzyme A biosynthesis; CoA from (R)-pantothenate: step 4/5. Its function is as follows. Reversibly transfers an adenylyl group from ATP to 4'-phosphopantetheine, yielding dephospho-CoA (dPCoA) and pyrophosphate. The sequence is that of Phosphopantetheine adenylyltransferase from Buchnera aphidicola subsp. Schizaphis graminum (strain Sg).